The following is a 338-amino-acid chain: Protein FosB (338 aa).

2 disordered regions span residues 1–54 and 80–179; these read MFQA…PGSF and AQSQ…RREL. Polar residues-rich tracts occupy residues 13–31 and 102–112; these read SRCSSSPSAESQYLSSVDS and TSYSTPGLSAY. S27 is subject to Phosphoserine. Over residues 123-137 the composition is skewed to low complexity; it reads PSTSTTTSGPVSARP. The 64-residue stretch at 155–218 folds into the bZIP domain; it reads EEKRRVRRER…ERLEFVLVAH (64 aa). The segment at 157-182 is basic motif; it reads KRRVRRERNKLAAAKCRNRRRELTDR. The tract at residues 183–211 is leucine-zipper; sequence LQAETDQLEEEKAELESEIAELQKEKERL. Disordered regions lie at residues 222–276 and 316–338; these read CKIP…PPNL and GAQRTSGSEQPSDPLNSPSLLAL. Pro residues predominate over residues 256-265; the sequence is LPPPPPPPLP. Composition is skewed to polar residues over residues 266–276 and 318–338; these read FQSSRDAPPNL and QRTSGSEQPSDPLNSPSLLAL.

This sequence belongs to the bZIP family. Fos subfamily. Heterodimer; binds to DNA as heterodimer. Component of an AP-1 transcription factor complex; composed of FOS-JUN heterodimers. As part of the AP-1 transcription factor complex, forms heterodimers with JUN, JUNB or JUND, thereby binding to the AP-1 consensus sequence and stimulating transcription. Interacts with the BAF multiprotein chromatin-remodeling complex subunits SMARCB1 and SMARCD1. Interacts with ARID1A and JUN. As to quaternary structure, homodimer under oxidizing conditions and monomer under reducing conditions (in vitro). Heterodimer; binds to DNA as heterodimer. Forms heterodimers with JUNB, JUN or JUND; thereby binding to the AP-1 consensus sequence but does not stimulate transcription. Forms heterodimers with JUND under oxidizing conditions. Phosphorylated. In terms of processing, phosphorylated at Ser-27 by CSNK2A1; phosphorylation increases protein stability and transactivation potential. As to expression, expressed in brain, including the preoptic area of the hypothalamus, the main and accessory olfactory bulbs, the pyriform cortex and the hippocampus (at protein level). Expressed in the neurons of the subgranular zone of the dentate gyrus in the hippocampus (at protein level). Expressed in pyramidal cells in CA1 and CA3, in the dentate gyrus and the nucleus accumbens of the striatum (at protein level). In terms of tissue distribution, expressed in the core and shell of the nucleus accumbens of the striatum (at protein level). Expressed in the neurons of the subgranular zone of the dentate gyrus in the hippocampus (at protein level).

Its subcellular location is the nucleus. In terms of biological role, heterodimerizes with proteins of the JUN family to form an AP-1 transcription factor complex, thereby enhancing their DNA binding activity to gene promoters containing an AP-1 consensus sequence 5'-TGA[GC]TCA-3' and enhancing their transcriptional activity. As part of the AP-1 complex, facilitates enhancer selection together with cell-type-specific transcription factors by collaboratively binding to nucleosomal enhancers and recruiting the SWI/SNF (BAF) chromatin remodeling complex to establish accessible chromatin. Together with JUN, plays a role in activation-induced cell death of T cells by binding to the AP-1 promoter site of FASLG/CD95L, and inducing its transcription in response to activation of the TCR/CD3 signaling pathway. Exhibits transactivation activity in vitro. Involved in the display of nurturing behavior towards newborns. May play a role in neurogenesis in the hippocampus and in learning and memory-related tasks by regulating the expression of various genes involved in neurogenesis, depression and epilepsy. Implicated in behavioral responses related to morphine reward and spatial memory. Functionally, exhibits lower transactivation activity than isoform 1 in vitro. The heterodimer with JUN does not display any transcriptional activity, and may thereby act as an transcriptional inhibitor. May be involved in the regulation of neurogenesis in the hippocampus. May play a role in synaptic modifications in nucleus accumbens medium spiny neurons and thereby play a role in adaptive and pathological reward-dependent learning, including maladaptive responses involved in drug addiction. Seems to be more stably expressed with a half-life of ~9.5 hours in cell culture as compared to 1.5 hours half-life of isoform 1. This Mus musculus (Mouse) protein is Protein FosB.